A 211-amino-acid polypeptide reads, in one-letter code: Regulator of G-protein signaling 2 (211 aa).

The interval 32-66 (KMKRTLLKDWKTRLSYFLQNSSTPGKPKTGKKSKQ) is necessary for membrane association. The interval 79-116 (LWAEAFDELLASKYGLAAFRAFLKSEFCEENIEFWLAC) is necessary to inhibit protein synthesis. Residues 83–199 (AFDELLASKY…LESEFYQDLC (117 aa)) enclose the RGS domain.

As to quaternary structure, interacts with GNAQ. Does not interact with GNAI1 and GNAI3. Interacts with EIF2B5. Interacts with PRKG1 (isoform alpha). In terms of processing, phosphorylated by protein kinase C. Phosphorylation by PRKG1 leads to activation of RGS2 activity.

The protein resides in the cell membrane. Its subcellular location is the cytoplasm. It localises to the nucleus. It is found in the nucleolus. Its function is as follows. Regulates G protein-coupled receptor signaling cascades. Inhibits signal transduction by increasing the GTPase activity of G protein alpha subunits, thereby driving them into their inactive GDP-bound form. It is involved in the negative regulation of the angiotensin-activated signaling pathway. Plays a role in the regulation of blood pressure in response to signaling via G protein-coupled receptors and GNAQ. Plays a role in regulating the constriction and relaxation of vascular smooth muscle. Binds EIF2B5 and blocks its activity, thereby inhibiting the translation of mRNA into protein. The chain is Regulator of G-protein signaling 2 (Rgs2) from Rattus norvegicus (Rat).